The chain runs to 122 residues: Large ribosomal subunit protein uL14 (122 aa).

This sequence belongs to the universal ribosomal protein uL14 family. Part of the 50S ribosomal subunit. Forms a cluster with proteins L3 and L19. In the 70S ribosome, L14 and L19 interact and together make contacts with the 16S rRNA in bridges B5 and B8.

Binds to 23S rRNA. Forms part of two intersubunit bridges in the 70S ribosome. In Ruminiclostridium cellulolyticum (strain ATCC 35319 / DSM 5812 / JCM 6584 / H10) (Clostridium cellulolyticum), this protein is Large ribosomal subunit protein uL14.